Consider the following 339-residue polypeptide: Caspase drICE (339 aa).

Positions 1–28 (MDATNNGESADQVGIRVGNPEQPNDHTD) are excised as a propeptide. Residues 1-45 (MDATNNGESADQVGIRVGNPEQPNDHTDALGSVGSGGAGSSGLVA) form a disordered region. Catalysis depends on residues H169 and C211. Residues 218–230 (GGVTMQRSQTETD) constitute a propeptide that is removed on maturation.

The protein belongs to the peptidase C14A family. As to quaternary structure, heterotetramer that consists of two anti-parallel arranged heterodimers, each one formed by a 21 kDa (p21) and a 12 kDa (p12) subunit. Inactive pro-form can homodimerize. Dronc and Drice can form a stable complex. Interacts with Diap2 (via BIR3 domain) to form a stable complex. May interact with some isoforms of Dark.

Its activity is regulated as follows. Zymogen activated by proteolytic cleavage; cleaved by the initiator caspase Dronc upon apoptosis induction. Functionally, involved in the activation cascade of caspases responsible for apoptosis execution. Acts downstream of rpr. Cleaves baculovirus p35 and lamin DmO in vitro. The protein is Caspase drICE (Drice) of Drosophila melanogaster (Fruit fly).